A 269-amino-acid chain; its full sequence is tRNA (guanine-N(7)-)-methyltransferase (269 aa).

Residues 1–38 (MDGVNDAANHTVESVPGRPSTASAPLEAGRRSPTGSRL) are disordered. Residues Glu91, Glu116, Asp143, and Asp166 each contribute to the S-adenosyl-L-methionine site. Asp166 is an active-site residue. Substrate is bound by residues Lys170, Asp202, and 247 to 250 (TKFE).

Belongs to the class I-like SAM-binding methyltransferase superfamily. TrmB family.

The enzyme catalyses guanosine(46) in tRNA + S-adenosyl-L-methionine = N(7)-methylguanosine(46) in tRNA + S-adenosyl-L-homocysteine. The protein operates within tRNA modification; N(7)-methylguanine-tRNA biosynthesis. Catalyzes the formation of N(7)-methylguanine at position 46 (m7G46) in tRNA. This chain is tRNA (guanine-N(7)-)-methyltransferase, found in Nocardia farcinica (strain IFM 10152).